Reading from the N-terminus, the 161-residue chain is DNA-directed RNA polymerase 18 kDa subunit (161 aa).

It belongs to the poxviridae DNA-directed RNA polymerase 18 kDa subunit family. In terms of assembly, the DNA-dependent RNA polymerase used for intermediate and late genes expression consists of eight subunits Rpo30/OPG66, Rpo7/OPG90, Rpo22/OPG103, Rpo147/OPG105, Rpo18/OPG119, Rpo19/OPG131, Rpo132/OPG151 and Rpo35/OPG156. The same holoenzyme, with the addition of the transcription-specificity factor OPG109, is used for early gene expression.

It localises to the virion. The enzyme catalyses RNA(n) + a ribonucleoside 5'-triphosphate = RNA(n+1) + diphosphate. Part of the DNA-dependent RNA polymerase which catalyzes the transcription of viral DNA into RNA using the four ribonucleoside triphosphates as substrates. Responsible for the transcription of early, intermediate and late genes. DNA-dependent RNA polymerase associates with the early transcription factor (ETF), itself composed of OPG118 and OPG133, thereby allowing the early genes transcription. Late transcription, and probably also intermediate transcription, require newly synthesized RNA polymerase. This is DNA-directed RNA polymerase 18 kDa subunit (OPG119) from Homo sapiens (Human).